We begin with the raw amino-acid sequence, 184 residues long: ATP synthase subunit delta (184 aa).

This sequence belongs to the ATPase delta chain family. As to quaternary structure, F-type ATPases have 2 components, F(1) - the catalytic core - and F(0) - the membrane proton channel. F(1) has five subunits: alpha(3), beta(3), gamma(1), delta(1), epsilon(1). F(0) has three main subunits: a(1), b(2) and c(10-14). The alpha and beta chains form an alternating ring which encloses part of the gamma chain. F(1) is attached to F(0) by a central stalk formed by the gamma and epsilon chains, while a peripheral stalk is formed by the delta and b chains.

The protein localises to the cell inner membrane. Its function is as follows. F(1)F(0) ATP synthase produces ATP from ADP in the presence of a proton or sodium gradient. F-type ATPases consist of two structural domains, F(1) containing the extramembraneous catalytic core and F(0) containing the membrane proton channel, linked together by a central stalk and a peripheral stalk. During catalysis, ATP synthesis in the catalytic domain of F(1) is coupled via a rotary mechanism of the central stalk subunits to proton translocation. In terms of biological role, this protein is part of the stalk that links CF(0) to CF(1). It either transmits conformational changes from CF(0) to CF(1) or is implicated in proton conduction. In Rhizorhabdus wittichii (strain DSM 6014 / CCUG 31198 / JCM 15750 / NBRC 105917 / EY 4224 / RW1) (Sphingomonas wittichii), this protein is ATP synthase subunit delta.